Reading from the N-terminus, the 222-residue chain is Large ribosomal subunit protein uL1 (222 aa).

Belongs to the universal ribosomal protein uL1 family. Part of the 50S ribosomal subunit.

In terms of biological role, binds directly to 23S rRNA. Probably involved in E site tRNA release. Functionally, protein L1 is also a translational repressor protein, it controls the translation of its operon by binding to its mRNA. This Pyrobaculum calidifontis (strain DSM 21063 / JCM 11548 / VA1) protein is Large ribosomal subunit protein uL1.